The primary structure comprises 484 residues: ETS translocation variant 4 (484 aa).

A Glycyl lysine isopeptide (Lys-Gly) (interchain with G-Cter in SUMO2) cross-link involves residue lysine 6. Residues serine 90–proline 115 form a disordered region. A Glycyl lysine isopeptide (Lys-Gly) (interchain with G-Cter in SUMO) cross-link involves residue lysine 96. Serine 101 bears the Phosphoserine mark. A Glycyl lysine isopeptide (Lys-Gly) (interchain with G-Cter in SUMO2) cross-link involves residue lysine 139. Residues serine 140, serine 149, and serine 214 each carry the phosphoserine modification. Glycyl lysine isopeptide (Lys-Gly) (interchain with G-Cter in SUMO) cross-links involve residues lysine 226 and lysine 260. Lysine 322 participates in a covalent cross-link: Glycyl lysine isopeptide (Lys-Gly) (interchain with G-Cter in SUMO2). A DNA-binding region (ETS) is located at residues leucine 341–valine 421.

The protein belongs to the ETS family. Sumoylated; enhanced upon ERK/MAP kinase pathway activation, it positively regulates the transcriptional activator capacity. Sumoylation at Lys-96 probably requires phosphorylation at Ser-101. Transiently polysumoylated and desumoylated by SENP1. Sumoylation is a prerequisite to polyubiquitination which in turn increases proteasomal-mediated degradation. Probably polyubiquitinated by RNF4 and deubiquitinated by USP2. In terms of tissue distribution, expressed in keratinocytes.

It is found in the nucleus. Functionally, transcriptional activator. May play a role in keratinocyte differentiation. Its function is as follows. (Microbial infection) Binds to the enhancer of the adenovirus E1A gene and acts as a transcriptional activator; the core-binding sequence is 5'-[AC]GGA[AT]GT-3'. This chain is ETS translocation variant 4 (ETV4), found in Homo sapiens (Human).